The following is a 291-amino-acid chain: Elongation factor Ts (291 aa).

The tract at residues Thr-79–Val-82 is involved in Mg(2+) ion dislocation from EF-Tu.

This sequence belongs to the EF-Ts family.

It is found in the cytoplasm. Its function is as follows. Associates with the EF-Tu.GDP complex and induces the exchange of GDP to GTP. It remains bound to the aminoacyl-tRNA.EF-Tu.GTP complex up to the GTP hydrolysis stage on the ribosome. The protein is Elongation factor Ts of Dinoroseobacter shibae (strain DSM 16493 / NCIMB 14021 / DFL 12).